Consider the following 738-residue polypeptide: Ethylene receptor (738 aa).

Transmembrane regions (helical) follow at residues 23–43 (ISDF…IYFV), 54–74 (VLVQ…INLW), and 92–112 (VLTA…IPDL). Cu cation contacts are provided by Cys65 and His69. The region spanning 158–307 (DRHTILKTTL…VVADQVAVAL (150 aa)) is the GAF domain. The 240-residue stretch at 350–589 (VMNHEMRTPM…IFIVKLGFAE (240 aa)) folds into the Histidine kinase domain. His353 carries the phosphohistidine; by autocatalysis modification. The Response regulatory domain maps to 612 to 729 (PGLKVLVMDD…KMRSVLSELL (118 aa)). Asp660 is modified (4-aspartylphosphate).

This sequence belongs to the ethylene receptor family. As to quaternary structure, homodimer; disulfide-linked. Requires Cu cation as cofactor. In terms of processing, activation probably requires a transfer of a phosphate group between a His in the transmitter domain and an Asp of the receiver domain.

It is found in the endoplasmic reticulum membrane. It catalyses the reaction ATP + protein L-histidine = ADP + protein N-phospho-L-histidine.. Its function is as follows. May act early in the ethylene signal transduction pathway, possibly as an ethylene receptor, or as a regulator of the pathway. The protein is Ethylene receptor (ETR1) of Prunus persica (Peach).